A 331-amino-acid chain; its full sequence is Fructose-1,6-bisphosphatase class 1 2 (331 aa).

Mg(2+) contacts are provided by E80, D98, L100, and D101. Residues 101 to 104 (DGSS) and N189 each bind substrate. E261 lines the Mg(2+) pocket.

It belongs to the FBPase class 1 family. In terms of assembly, homotetramer. It depends on Mg(2+) as a cofactor.

The protein resides in the cytoplasm. The catalysed reaction is beta-D-fructose 1,6-bisphosphate + H2O = beta-D-fructose 6-phosphate + phosphate. The protein operates within carbohydrate biosynthesis; Calvin cycle. The protein is Fructose-1,6-bisphosphatase class 1 2 of Cereibacter sphaeroides (strain ATCC 17029 / ATH 2.4.9) (Rhodobacter sphaeroides).